We begin with the raw amino-acid sequence, 55 residues long: Light-harvesting polypeptide B-800/860 beta chain (55 aa).

Over 1 to 21 the chain is Cytoplasmic; that stretch reads ADANKVWPTGLTVAEAEELHT. A helical transmembrane segment spans residues 22 to 44; sequence YVTNGFRVFVGIAVVAHVLVFAA. Residue His38 participates in a bacteriochlorophyll binding. At 45–55 the chain is on the periplasmic side; it reads HPWGRGGALVA.

Belongs to the antenna complex beta subunit family. As to quaternary structure, the core complex is formed by different alpha and beta chains, binding bacteriochlorophyll molecules, and arranged most probably in tetrameric structures disposed around the reaction center. The non-pigmented gamma chains may constitute additional components.

It localises to the cell inner membrane. Functionally, antenna complexes are light-harvesting systems, which transfer the excitation energy to the reaction centers. The protein is Light-harvesting polypeptide B-800/860 beta chain of Rhodocyclus tenuis (Rhodospirillum tenue).